The primary structure comprises 304 residues: Ribonuclease Z (304 aa).

H63, H65, D67, H68, H141, D208, and H266 together coordinate Zn(2+). The Proton acceptor role is filled by D67.

The protein belongs to the RNase Z family. In terms of assembly, homodimer. Zn(2+) is required as a cofactor.

It carries out the reaction Endonucleolytic cleavage of RNA, removing extra 3' nucleotides from tRNA precursor, generating 3' termini of tRNAs. A 3'-hydroxy group is left at the tRNA terminus and a 5'-phosphoryl group is left at the trailer molecule.. Functionally, zinc phosphodiesterase, which displays some tRNA 3'-processing endonuclease activity. Probably involved in tRNA maturation, by removing a 3'-trailer from precursor tRNA. The chain is Ribonuclease Z from Chlamydia muridarum (strain MoPn / Nigg).